We begin with the raw amino-acid sequence, 265 residues long: Enolase-phosphatase E1 (265 aa).

2 residues coordinate Mg(2+): aspartate 18 and glutamate 20. Residues 144–145 (SS) and lysine 188 contribute to the substrate site. Residue aspartate 215 coordinates Mg(2+).

Belongs to the HAD-like hydrolase superfamily. MasA/MtnC family. In terms of assembly, monomer. It depends on Mg(2+) as a cofactor.

The protein resides in the cytoplasm. Its subcellular location is the nucleus. It carries out the reaction 5-methylsulfanyl-2,3-dioxopentyl phosphate + H2O = 1,2-dihydroxy-5-(methylsulfanyl)pent-1-en-3-one + phosphate. Its pathway is amino-acid biosynthesis; L-methionine biosynthesis via salvage pathway; L-methionine from S-methyl-5-thio-alpha-D-ribose 1-phosphate: step 3/6. It participates in amino-acid biosynthesis; L-methionine biosynthesis via salvage pathway; L-methionine from S-methyl-5-thio-alpha-D-ribose 1-phosphate: step 4/6. Bifunctional enzyme that catalyzes the enolization of 2,3-diketo-5-methylthiopentyl-1-phosphate (DK-MTP-1-P) into the intermediate 2-hydroxy-3-keto-5-methylthiopentenyl-1-phosphate (HK-MTPenyl-1-P), which is then dephosphorylated to form the acireductone 1,2-dihydroxy-3-keto-5-methylthiopentene (DHK-MTPene). This chain is Enolase-phosphatase E1, found in Candida albicans (strain SC5314 / ATCC MYA-2876) (Yeast).